Here is an 81-residue protein sequence, read N- to C-terminus: Ferredoxin (81 aa).

Positions K2–D30 constitute a 4Fe-4S ferredoxin-type domain. Positions 11, 14, 17, and 61 each coordinate [4Fe-4S] cluster.

[4Fe-4S] cluster is required as a cofactor.

In terms of biological role, ferredoxins are iron-sulfur proteins that transfer electrons in a wide variety of metabolic reactions. The polypeptide is Ferredoxin (fer) (Geobacillus stearothermophilus (Bacillus stearothermophilus)).